Here is a 55-residue protein sequence, read N- to C-terminus: uncharacterized protein (55 aa).

Positions M1–S30 are disordered.

This is an uncharacterized protein from Frog virus 3 (isolate Goorha) (FV-3).